The sequence spans 461 residues: MNMQESKSIIEVNGVSKFFGEKTALDHVTLNVKKGEFVTILGPSGCGKTTLLRLIAGFQTASEGEIKISGKEITQTPPHKRPVNTVFQKYALFPHLNVYDNIAFGLKLKKMPKQTIEKKVKAALKMVGMTDYEYRDVDSLSGGQQQRVAIARAIVNEPEVLLLDEPLAALDLKMRKDMQMELKEMHKSLGITFVYVTHDQEEALTLSDTIVVMSEGRIQQIGTPIDIYNEPINSFVADFIGESNILNGVMIHDKLVRFCNTEFECVDEGFGENMPVDVVIRPEDLYIFPVSEAAQLTGVVQSSVFKGVHYEMTVLCNGYEFLVQDYHHFEVGALVGLLVKPFDIHIMKKERVCNTFEGKLIDETHVEFLGCNFECAPVTGIEAGSEVKVEVGFDNVILQDNEEDGALTGEVKFILYKGDHYHLTVLSDWDENVFVDTNDVWDDGDRVGITIPPDGIRVIKN.

The region spanning 10 to 240 (IEVNGVSKFF…PINSFVADFI (231 aa)) is the ABC transporter domain. 42–49 (GPSGCGKT) provides a ligand contact to ATP.

This sequence belongs to the ABC transporter superfamily. Spermidine/putrescine importer (TC 3.A.1.11.1) family. In terms of assembly, the complex is composed of two ATP-binding proteins (PotA), two transmembrane proteins (PotB and PotC) and a solute-binding protein (PotD).

The protein localises to the cell inner membrane. It catalyses the reaction ATP + H2O + polyamine-[polyamine-binding protein]Side 1 = ADP + phosphate + polyamineSide 2 + [polyamine-binding protein]Side 1.. Part of the ABC transporter complex PotABCD involved in spermidine/putrescine import. Responsible for energy coupling to the transport system. The chain is Spermidine/putrescine import ATP-binding protein PotA from Bacteroides fragilis (strain YCH46).